The following is a 203-amino-acid chain: Somatotropin (203 aa).

The N-terminal stretch at 1–17 (MDRVVIVLSVLSVAASS) is a signal peptide. The residue at position 18 (glutamine 18) is a Pyrrolidone carboxylic acid. Histidine 35 serves as a coordination point for Zn(2+). An intrachain disulfide couples cysteine 68 to cysteine 176. Residue glutamate 185 coordinates Zn(2+). A disulfide bridge connects residues cysteine 193 and cysteine 201.

The protein belongs to the somatotropin/prolactin family.

It localises to the secreted. Functionally, growth hormone plays an important role in growth control and is involved in the regulation of several anabolic processes. Implicated as an osmoregulatory substance important for seawater adaptation. The protein is Somatotropin (gh) of Solea senegalensis (Senegalese sole).